The chain runs to 154 residues: Protein X (154 aa).

A mitochondrial targeting sequence region spans residues 68 to 117; the sequence is PCALRFTSARRMETTVNAPWSLPTVLHKRTIGLSGRSMTWIEEYIKDCVF.

The protein belongs to the orthohepadnavirus protein X family. In terms of assembly, may form homodimer. May interact with host CEBPA, CFLAR, CREB1, DDB1, E4F1, HBXIP, HSPD1/HSP60, NFKBIA, POLR2E and SMAD4. Interacts with host SMC5-SMC6 complex and induces its degradation. Interacts with host TRPC4AP; leading to prevent ubiquitination of TRPC4AP. Interacts with host PLSCR1; this interaction promotes ubiquitination and degradation of HBx and impairs HBx-mediated cell proliferation. In terms of processing, a fraction may be phosphorylated in insect cells and HepG2 cells, a human hepatoblastoma cell line. Phosphorylated in vitro by host protein kinase C or mitogen-activated protein kinase. N-acetylated in insect cells.

Its subcellular location is the host cytoplasm. The protein localises to the host nucleus. It localises to the host mitochondrion. Functionally, multifunctional protein that plays a role in silencing host antiviral defenses and promoting viral transcription. Does not seem to be essential for HBV infection. May be directly involved in development of cirrhosis and liver cancer (hepatocellular carcinoma). Most of cytosolic activities involve modulation of cytosolic calcium. The effect on apoptosis is controversial depending on the cell types in which the studies have been conducted. May induce apoptosis by localizing in mitochondria and causing loss of mitochondrial membrane potential. May also modulate apoptosis by binding host CFLAR, a key regulator of the death-inducing signaling complex (DISC). Promotes viral transcription by using the host E3 ubiquitin ligase DDB1 to target the SMC5-SMC6 complex to proteasomal degradation. This host complex would otherwise bind to viral episomal DNA, and prevents its transcription. Moderately stimulates transcription of many different viral and cellular transcription elements. Promoters and enhancers stimulated by HBx contain DNA binding sites for NF-kappa-B, AP-1, AP-2, c-EBP, ATF/CREB, or the calcium-activated factor NF-AT. The polypeptide is Protein X (Homo sapiens (Human)).